The chain runs to 376 residues: Chanoclavine-I aldehyde reductase easA (376 aa).

Residues proline 29–threonine 31, alanine 64, glutamine 106, and histidine 173 contribute to the FMN site. The substrate site is built by histidine 173 and asparagine 176. The Proton donor role is filled by tyrosine 178. FMN contacts are provided by residues lysine 225, glycine 297, glycine 323 to arginine 324, and arginine 324. Tyrosine 351 serves as a coordination point for substrate.

The protein belongs to the NADH:flavin oxidoreductase/NADH oxidase family. Requires FMN as cofactor.

It catalyses the reaction dihydrochanoclavine-I aldehyde + NADP(+) = chanoclavine-I aldehyde + NADPH + H(+). Its pathway is alkaloid biosynthesis; ergot alkaloid biosynthesis. Aldehyde reductase; part of the gene cluster that mediates the biosynthesis of fumiclavanine C, a fungal ergot alkaloid. DmaW catalyzes the first step of ergot alkaloid biosynthesis by condensing dimethylallyl diphosphate (DMAP) and tryptophan to form 4-dimethylallyl-L-tryptophan. The second step is catalyzed by the methyltransferase easF that methylates 4-dimethylallyl-L-tryptophan in the presence of S-adenosyl-L-methionine, resulting in the formation of 4-dimethylallyl-L-abrine. The catalase easC and the FAD-dependent oxidoreductase easE then transform 4-dimethylallyl-L-abrine to chanoclavine-I which is further oxidized by EasD in the presence of NAD(+), resulting in the formation of chanoclavine-I aldehyde. EasA reduces chanoclavine-I aldehyde to dihydrochanoclavine-I aldehyde that spontaneously dehydrates to form 6,8-dimethyl-6,7-didehydroergoline. EasG then catalyzes the reduction of 6,8-dimethyl-6,7-didehydroergoline to form festuclavine. Hydrolysis of festuclavine by easM then leads to the formation of fumigaclavine B which is in turn acetylated by easN to fumigaclavine A. Finally, easL catalyzes the conversion of fumigaclavine A into fumigaclavine C by attaching a dimethylallyl moiety to C-2 of the indole nucleus. This Aspergillus fumigatus (strain ATCC MYA-4609 / CBS 101355 / FGSC A1100 / Af293) (Neosartorya fumigata) protein is Chanoclavine-I aldehyde reductase easA.